Consider the following 436-residue polypeptide: Bifunctional IPC transferase and DIPP synthase (436 aa).

The mobA-like NTP transferase stretch occupies residues G11 to A241. Residues L17–A19 and K32 contribute to the CTP site. Residues A242–R435 form a CDP-alcohol phosphatidyltransferases region. The next 3 membrane-spanning stretches (helical) occupy residues V275–L295, A349–T371, and L397–G417.

This sequence in the N-terminal section; belongs to the MobA family. The protein in the C-terminal section; belongs to the CDP-alcohol phosphatidyltransferase class-I family.

Its subcellular location is the membrane. The catalysed reaction is 1D-myo-inositol 3-phosphate + CTP + H(+) = CDP-1L-myo-inositol + diphosphate. It catalyses the reaction CDP-1L-myo-inositol + 1D-myo-inositol 3-phosphate = bis(1L-myo-inositol) 3,1'-phosphate 1-phosphate + CMP + H(+). Its function is as follows. Involved in biosynthesis of di-myo-inositol phosphate (DIP), a widespread organic solute in microorganisms adapted to hot environments. Catalyzes the condensation of CTP and L-myo-inositol-1-phosphate into CDP-L-myo-inositol, as well as the biosynthesis of di-myo-inositol-1,3'-phosphate-1'-phosphate (DIPP) from CDP-L-myo-inositol and L-myo-inositol-1-phosphate. This is Bifunctional IPC transferase and DIPP synthase from Rubrobacter xylanophilus (strain DSM 9941 / JCM 11954 / NBRC 16129 / PRD-1).